Consider the following 587-residue polypeptide: MAATTYERLKLHVTPEKFYVEACDDGADDVLIIDRVSTEVTLSVKKDIPPSAVTRPIFGILGTIHLVAGNYLIVITKKKKIGEFFNHVIWKATDFDVLSYKKTMLHLTDIQLQDNKTFLAMMNHVLSMDGFYFSTTYDLTHTLQRLSNTSPEFQEMSLLERADQRFVWNGHLLRELSAQPEVHRFALPVLHGFITMHSCSINGKYFDWILISRRSCFRAGVRYYVRGIDSEGHAANFVETEQIVHYNGSRASFVQTRGSIPLYWSQRPNLKYKPLPLINKVANHMDGFQRHFDSQIIIYGKQVIINLVNQKGSEKPLEQAFATMVSSLGNGMIRYIAFDFHKECKNMRWDRLSILLDQVAEMQDELSYFLVDPAGVVLSTQEGVFRSNCMDCLDRTNVIQSLLARRSLQAQLQRLGVLHVGQKLEEQDEFEKIYKNAWADNANACAKQYAGTGALKTDFTRTGKRTQLGLIMDGWNSLIRYYKNNFSDGFRQDSIDLFLGNYSVDELESHSPLSVPRDLKFLALPIIMVVAFSMCIICLLMAGDTWTETLAYVLFWGVASIGTFFIILYNGKDFVDAPRLVQKEKID.

The Cytoplasmic portion of the chain corresponds to 1–520; that stretch reads MAATTYERLK…SPLSVPRDLK (520 aa). Positions 122–451 constitute an SAC domain; sequence MNHVLSMDGF…ANACAKQYAG (330 aa). The tract at residues 452–587 is essential for phosphatidylinositol-4-phosphate phosphatase activity; that stretch reads TGALKTDFTR…PRLVQKEKID (136 aa). Residue lysine 456 is modified to N6-acetyllysine. A helical membrane pass occupies residues 521-541; sequence FLALPIIMVVAFSMCIICLLM. The Lumenal portion of the chain corresponds to 542–548; it reads AGDTWTE. Residues 549-569 form a helical membrane-spanning segment; the sequence is TLAYVLFWGVASIGTFFIILY. At 570–587 the chain is on the cytoplasmic side; that stretch reads NGKDFVDAPRLVQKEKID.

Interacts with TMEM39A. Interacts with SEC23A and SEC24A; this interaction is reduced in the absence of TMEM39A. Interacts with PLEKHA3 and VAPA and/or VAPB to form a ternary complex.

The protein resides in the endoplasmic reticulum membrane. It is found in the golgi apparatus membrane. The enzyme catalyses a 1,2-diacyl-sn-glycero-3-phospho-(1D-myo-inositol-3-phosphate) + H2O = a 1,2-diacyl-sn-glycero-3-phospho-(1D-myo-inositol) + phosphate. It carries out the reaction a 1,2-diacyl-sn-glycero-3-phospho-(1D-myo-inositol 4-phosphate) + H2O = a 1,2-diacyl-sn-glycero-3-phospho-(1D-myo-inositol) + phosphate. Functionally, phosphoinositide phosphatase which catalyzes the hydrolysis of phosphatidylinositol 4-phosphate (PtdIns(4)P), phosphatidylinositol 3-phosphate (PtdIns(3)P) and has low activity towards phosphatidylinositol-3,5-bisphosphate (PtdIns(3,5)P2). Shows a very robust PtdIns(4)P phosphatase activity when it binds PtdIns(4)P in a 'cis' configuration in the cellular environment, with much less activity seen when it binds PtdIns(4)P in 'trans' configuration. PtdIns(4)P phosphatase activity (when it binds PtdIns(4)P in 'trans' configuration) is enhanced in the presence of PLEKHA3. This chain is Phosphatidylinositol-3-phosphatase SAC1 (SACM1L), found in Bos taurus (Bovine).